Consider the following 129-residue polypeptide: 3-aminoacrylate deaminase RutC (129 aa).

It belongs to the RutC family.

The enzyme catalyses (Z)-3-aminoacrylate + H2O + H(+) = 3-oxopropanoate + NH4(+). Involved in pyrimidine catabolism. Catalyzes the deamination of 3-aminoacrylate to malonic semialdehyde, a reaction that can also occur spontaneously. RutC may facilitate the reaction and modulate the metabolic fitness, rather than catalyzing essential functions. In Yersinia enterocolitica serotype O:8 / biotype 1B (strain NCTC 13174 / 8081), this protein is 3-aminoacrylate deaminase RutC.